The following is a 529-amino-acid chain: Cytochrome P450 monooxygenase patI (529 aa).

The Cytoplasmic segment spans residues 1 to 8; that stretch reads MDFTQVPP. The chain crosses the membrane as a helical span at residues 9 to 25; it reads SYILGVLLSSTSILFCL. The Lumenal segment spans residues 26 to 529; it reads KYLLRSGYRP…EAQGVFSRFD (504 aa). N-linked (GlcNAc...) asparagine glycans are attached at residues N81 and N383. C449 contacts heme.

This sequence belongs to the cytochrome P450 family. Requires heme as cofactor.

The protein resides in the endoplasmic reticulum membrane. It catalyses the reaction 3-hydroxybenzyl alcohol + reduced [NADPH--hemoprotein reductase] + O2 = gentisyl alcohol + oxidized [NADPH--hemoprotein reductase] + H2O + H(+). Its pathway is mycotoxin biosynthesis; patulin biosynthesis. Its function is as follows. Cytochrome P450 monooxygenase; part of the gene cluster that mediates the biosynthesis of patulin, an acetate-derived tetraketide mycotoxin produced by several fungal species that shows antimicrobial properties against several bacteria. PatI catalyzes the conversion of m-hydroxybenzyl alcohol into gentisyl alcohol. The pathway begins with the synthesis of 6-methylsalicylic acid by the polyketide synthase (PKS) patK via condensation of acetate and malonate units. The 6-methylsalicylic acid decarboxylase patG then catalyzes the decarboxylation of 6-methylsalicylic acid to yield m-cresol (also known as 3-methylphenol). These first reactions occur in the cytosol. The intermediate m-cresol is then transported into the endoplasmic reticulum where the cytochrome P450 monooxygenase patH converts it to m-hydroxybenzyl alcohol, which is further converted to gentisyl alcohol by the cytochrome P450 monooxygenase patI. The oxidoreductases patJ and patO further convert gentisyl alcohol to isoepoxydon in the vacuole. PatN catalyzes then the transformation of isoepoxydon into phyllostine. The cluster protein patF is responsible for the conversion from phyllostine to neopatulin whereas the alcohol dehydrogenase patD converts neopatulin to E-ascladiol. The steps between isoepoxydon and E-ascladiol occur in the cytosol, and E-ascladiol is probably secreted to the extracellular space by one of the cluster-specific transporters patC or patM. Finally, the secreted patulin synthase patE catalyzes the conversion of E-ascladiol to patulin. In Aspergillus clavatus (strain ATCC 1007 / CBS 513.65 / DSM 816 / NCTC 3887 / NRRL 1 / QM 1276 / 107), this protein is Cytochrome P450 monooxygenase patI.